Reading from the N-terminus, the 217-residue chain is Adenylate kinase (217 aa).

Residue 10–15 (GAGKGT) coordinates ATP. Positions 30-59 (STGDMFRAAIKEGTELGLQAKSFMDQGALV) are NMP. Residues Thr-31, Arg-36, 57 to 59 (ALV), 85 to 88 (GFPR), and Gln-92 contribute to the AMP site. The LID stretch occupies residues 126–163 (GRRICKTCGASYHLIFNPPAEEGKCDKDGGELYTRADD). Arg-127 contacts ATP. The Zn(2+) site is built by Cys-130 and Cys-133. 136–137 (SY) lines the ATP pocket. Zn(2+) is bound by residues Cys-150 and Asp-153. AMP-binding residues include Arg-160 and Arg-171. Residue Gln-199 participates in ATP binding.

Belongs to the adenylate kinase family. Monomer.

It localises to the cytoplasm. It carries out the reaction AMP + ATP = 2 ADP. It participates in purine metabolism; AMP biosynthesis via salvage pathway; AMP from ADP: step 1/1. Functionally, catalyzes the reversible transfer of the terminal phosphate group between ATP and AMP. Plays an important role in cellular energy homeostasis and in adenine nucleotide metabolism. This Lysinibacillus sphaericus (strain C3-41) protein is Adenylate kinase.